Reading from the N-terminus, the 411-residue chain is Tyrosine--tRNA ligase (411 aa).

L-tyrosine is bound at residue tyrosine 34. The 'HIGH' region motif lies at 39-48 (CTATSLHIGS). The L-tyrosine site is built by tyrosine 171 and glutamine 175. The 'KMSKS' region motif lies at 231-235 (KMGKT). An ATP-binding site is contributed by lysine 234. The region spanning 345–411 (ISAYELFHEA…GKKRHILVRV (67 aa)) is the S4 RNA-binding domain.

This sequence belongs to the class-I aminoacyl-tRNA synthetase family. TyrS type 1 subfamily. As to quaternary structure, homodimer.

Its subcellular location is the cytoplasm. It carries out the reaction tRNA(Tyr) + L-tyrosine + ATP = L-tyrosyl-tRNA(Tyr) + AMP + diphosphate + H(+). Functionally, catalyzes the attachment of tyrosine to tRNA(Tyr) in a two-step reaction: tyrosine is first activated by ATP to form Tyr-AMP and then transferred to the acceptor end of tRNA(Tyr). This Rickettsia africae (strain ESF-5) protein is Tyrosine--tRNA ligase.